We begin with the raw amino-acid sequence, 131 residues long: MARKKGTSTRKKQKKLSFDYGVVHIKSTFNNTIITLTDKDGNTLTWASGGTVGFEGTRKGTPYAAQLAADKVAREALRMGIKRVDVLVKGPGPGREPAIRTLQGAGLEINQIKDVTPIPFNGCRPKKRRRV.

It belongs to the universal ribosomal protein uS11 family. Part of the 30S ribosomal subunit. Interacts with proteins S7 and S18. Binds to IF-3.

Located on the platform of the 30S subunit, it bridges several disparate RNA helices of the 16S rRNA. Forms part of the Shine-Dalgarno cleft in the 70S ribosome. The protein is Small ribosomal subunit protein uS11 of Thermotoga neapolitana (strain ATCC 49049 / DSM 4359 / NBRC 107923 / NS-E).